We begin with the raw amino-acid sequence, 465 residues long: MDKSSKFFFEDQKYNKERIVRVLGGNLALLKSKGILYEDSSGDLIFNYVGVISNGRNVIFILPKYCNRHLDEHSKRTLFNKLLKIFKKYSGLNKSRESDYFVSELDSDEVSDFMIADYLLNDFSLNGYYQKKFTEYEIDGEGIIDWSKTVNEITPVFSKGVPYYFSTYNEVVQKDEYHLIVKIHKWALSKYFNDFGVILGFTGLEFDKSCDGMKILDYADFFGSVINKEIVNTYVDRDVKLLKALKTAIDREENQFSKRPTLSLYGTKYFHRVWEEVCKTVFSHVNEYVKKISRPNWINFTDIEVNKEKKTLEPDIIKAFEYRSKEYFLILDAKYYNINFDGKKLEGNPGVEDITKQLLYDKALEKLSRGKTKHNAFLFPSSNSTNTFKVFGSVDFDFLDIAAVTLVYISAEQVYNLYLENKTFSTDDLFKFVSEINKSKKRHSVITSTLYGNMFLFTKRLSDKN.

BsuMI restriction activity requires YdiR, YdiS and YdjA.

It catalyses the reaction Endonucleolytic cleavage of DNA to give specific double-stranded fragments with terminal 5'-phosphates.. Its function is as follows. A P subtype restriction enzyme that recognizes the double-stranded sequence 5'-CTCGAG-3'; the cleavage site is unknown. The polypeptide is Type II restriction enzyme BsuMI component YdjA (ydjA) (Bacillus subtilis (strain 168)).